The chain runs to 132 residues: QKPKLLYCSNGGYFLRIFPDGKVDGTRDRSDPYIQLQFYAESVGEVYIKSLETGQYLAMDSDGQLYASQSPSEECLFLERLEENNYNTYKSKVHADKDWFVGIKKNGKTKPGSRTHFGQKAILFLPLPVSSD.

Residues N10 and 108–120 (KTKPGSRTHFGQK) contribute to the heparin site.

The protein belongs to the heparin-binding growth factors family.

Its subcellular location is the secreted. The protein resides in the cytoplasm. The protein localises to the cell cortex. It localises to the cytosol. It is found in the nucleus. In terms of biological role, plays an important role in the regulation of cell survival, cell division, angiogenesis, cell differentiation and cell migration. Functions as a potent mitogen in vitro. Acts as a ligand for FGFR1 and integrins. Binds to FGFR1 in the presence of heparin leading to FGFR1 dimerization and activation via sequential autophosphorylation on tyrosine residues which act as docking sites for interacting proteins, leading to the activation of several signaling cascades. Binds to integrins. Its binding to integrins and subsequent ternary complex formation with integrins and FGFR1 are essential for FGF1 signaling. The chain is Fibroblast growth factor 1 (fgf1) from Notophthalmus viridescens (Eastern newt).